The sequence spans 221 residues: Iron-sulfur cluster repair protein YtfE (221 aa).

Belongs to the RIC family. YtfE subfamily. In terms of assembly, homodimer.

It localises to the cytoplasm. Functionally, di-iron-containing protein involved in the repair of iron-sulfur clusters damaged by oxidative and nitrosative stress conditions. This is Iron-sulfur cluster repair protein YtfE from Dickeya chrysanthemi (strain Ech1591) (Dickeya zeae (strain Ech1591)).